The sequence spans 289 residues: MYFQDIIQNLNKFWSEEGCLIMQPYDTEKGAGTMNPHTFLRAIGPEPWSVAYAEPCRRPTDGRFGDNPNRAQHYFQYQVIIKPSPDEIQEKYLTSLEFLGINPKDHDIRFVEDNWESPTLGAWGVGWEVWLDGMEVTQFTYFQQCGGIDCNPIPIEITYGLERIAMFLQDKESIWDLNWNKDINYSDIWLQFEKNQCSFNFSNSNPENMRKLFAIYQEEANSLIEKDLTYPALDFVLKCSHCFNLLDARGVISVTDRAQYIEKIRKLAREVATSWIKERELMNFPLVKK.

This sequence belongs to the class-II aminoacyl-tRNA synthetase family. As to quaternary structure, tetramer of two alpha and two beta subunits.

It is found in the cytoplasm. It catalyses the reaction tRNA(Gly) + glycine + ATP = glycyl-tRNA(Gly) + AMP + diphosphate. This Prochlorococcus marinus subsp. pastoris (strain CCMP1986 / NIES-2087 / MED4) protein is Glycine--tRNA ligase alpha subunit.